The primary structure comprises 300 residues: 4-hydroxy-tetrahydrodipicolinate synthase (300 aa).

Residue Thr55 participates in pyruvate binding. The active-site Proton donor/acceptor is the Tyr143. The active-site Schiff-base intermediate with substrate is the Lys171. Residue Ile211 coordinates pyruvate.

It belongs to the DapA family. Homotetramer; dimer of dimers.

The protein resides in the cytoplasm. It catalyses the reaction L-aspartate 4-semialdehyde + pyruvate = (2S,4S)-4-hydroxy-2,3,4,5-tetrahydrodipicolinate + H2O + H(+). It functions in the pathway amino-acid biosynthesis; L-lysine biosynthesis via DAP pathway; (S)-tetrahydrodipicolinate from L-aspartate: step 3/4. Catalyzes the condensation of (S)-aspartate-beta-semialdehyde [(S)-ASA] and pyruvate to 4-hydroxy-tetrahydrodipicolinate (HTPA). This chain is 4-hydroxy-tetrahydrodipicolinate synthase, found in Mycolicibacterium paratuberculosis (strain ATCC BAA-968 / K-10) (Mycobacterium paratuberculosis).